The following is a 328-amino-acid chain: Transcription initiation factor IIE subunit beta (328 aa).

Positions 32-105 (QKKTNDTVIT…SSPSKKVRPG (74 aa)) are disordered. Ser52 carries the phosphoserine modification. The span at 85 to 94 (LDDDDDDEDF) shows a compositional bias: acidic residues. Residues Ser97 and Ser106 each carry the phosphoserine modification. Residues 113 to 187 (QANQTDISKS…FKYLSTYDVH (75 aa)) constitute a DNA-binding region (TFIIE beta).

Belongs to the TFIIE beta subunit family. TFIIE is a tetramer of two alpha (TFA1) and two beta (TFA2) subunits.

The protein localises to the nucleus. Recruits TFIIH to the initiation complex and stimulates the RNA polymerase II C-terminal domain kinase and DNA-dependent ATPase activities of TFIIH. Both TFIIH and TFIIE are required for promoter clearance by RNA polymerase. This is Transcription initiation factor IIE subunit beta (TFA2) from Saccharomyces cerevisiae (strain ATCC 204508 / S288c) (Baker's yeast).